Here is a 328-residue protein sequence, read N- to C-terminus: MANSASPEQNQNHCSAINSSILLTQGNLPTLTLSGKIRVTVTFFLFLLSTAFNASFLLKLQKWTQRKEKGKKLSRMKVLLKHLTLANLLETLIVMPLDGMWNITVQWYAGEFLCKVLSYLKLFSMYAPAFMMVVISLDRSLAITRPLAVKSNSRLGRFMIGLAWLLSSIFAGPQLYIFRMIHLADSSGQTEGFSQCVTHGSFPQWWHQAFYNFFTFSCLFIIPLLIMLICNAKIMFTLTRVLQQDPHNLQLNQSKNNIPRARLRTLKMTVAFAASFIVCWTPYYVLGIWYWFDPEMVNRVSDPVNHFFFLFAFLNPCFDPLIYGYFSL.

Residues 1 to 38 lie on the Extracellular side of the membrane; that stretch reads MANSASPEQNQNHCSAINSSILLTQGNLPTLTLSGKIR. Asparagine 18 is a glycosylation site (N-linked (GlcNAc...) asparagine). The chain crosses the membrane as a helical span at residues 39–58; sequence VTVTFFLFLLSTAFNASFLL. Over 59–77 the chain is Cytoplasmic; sequence KLQKWTQRKEKGKKLSRMK. Residues 78-97 form a helical membrane-spanning segment; it reads VLLKHLTLANLLETLIVMPL. The Extracellular segment spans residues 98–115; sequence DGMWNITVQWYAGEFLCK. The N-linked (GlcNAc...) asparagine glycan is linked to asparagine 102. A disulfide bridge connects residues cysteine 114 and cysteine 196. A helical membrane pass occupies residues 116–137; that stretch reads VLSYLKLFSMYAPAFMMVVISL. The Cytoplasmic segment spans residues 138 to 164; it reads DRSLAITRPLAVKSNSRLGRFMIGLAW. Residues 165 to 184 form a helical membrane-spanning segment; sequence LLSSIFAGPQLYIFRMIHLA. The Extracellular segment spans residues 185–212; the sequence is DSSGQTEGFSQCVTHGSFPQWWHQAFYN. Residues 213–232 traverse the membrane as a helical segment; sequence FFTFSCLFIIPLLIMLICNA. Over 233 to 281 the chain is Cytoplasmic; sequence KIMFTLTRVLQQDPHNLQLNQSKNNIPRARLRTLKMTVAFAASFIVCWT. A helical transmembrane segment spans residues 282 to 300; that stretch reads PYYVLGIWYWFDPEMVNRV. Topologically, residues 301 to 306 are extracellular; it reads SDPVNH. The helical transmembrane segment at 307 to 326 threads the bilayer; it reads FFFLFAFLNPCFDPLIYGYF. Residues 327–328 lie on the Cytoplasmic side of the membrane; the sequence is SL.

This sequence belongs to the G-protein coupled receptor 1 family. As to expression, pituitary gland.

It is found in the cell membrane. In terms of biological role, receptor for gonadotropin releasing hormone (GnRH) that mediates the action of GnRH to stimulate the secretion of the gonadotropic hormones luteinizing hormone (LH) and follicle-stimulating hormone (FSH). This receptor mediates its action by association with G-proteins that activate a phosphatidylinositol-calcium second messenger system. The polypeptide is Gonadotropin-releasing hormone receptor (GNRHR) (Sus scrofa (Pig)).